The chain runs to 492 residues: Bifunctional shikimate kinase/3-dehydroquinate synthase (492 aa).

The interval 1–161 (MRIFLVGMMG…TALVVLEALD (161 aa)) is shikimate kinase. Residue 10 to 15 (GSGKST) participates in ATP binding. Serine 14 is a binding site for Mg(2+). Residues aspartate 32, arginine 56, and glycine 78 each coordinate substrate. Arginine 114 serves as a coordination point for ATP. Arginine 131 provides a ligand contact to substrate. Positions 162–492 (EKEISTIEKP…DPLELLEVVD (331 aa)) are 3-dehydroquinate synthase.

In the N-terminal section; belongs to the shikimate kinase family. The protein in the C-terminal section; belongs to the sugar phosphate cyclases superfamily. Dehydroquinate synthase family. Mg(2+) serves as cofactor. It depends on NAD(+) as a cofactor. A divalent metal cation is required as a cofactor.

It localises to the cytoplasm. It catalyses the reaction 7-phospho-2-dehydro-3-deoxy-D-arabino-heptonate = 3-dehydroquinate + phosphate. The enzyme catalyses shikimate + ATP = 3-phosphoshikimate + ADP + H(+). It participates in metabolic intermediate biosynthesis; chorismate biosynthesis; chorismate from D-erythrose 4-phosphate and phosphoenolpyruvate: step 2/7. The protein operates within metabolic intermediate biosynthesis; chorismate biosynthesis; chorismate from D-erythrose 4-phosphate and phosphoenolpyruvate: step 5/7. Catalyzes the specific phosphorylation of the 3-hydroxyl group of shikimic acid using ATP as a cosubstrate. The polypeptide is Bifunctional shikimate kinase/3-dehydroquinate synthase (aroKB) (Thermotoga maritima (strain ATCC 43589 / DSM 3109 / JCM 10099 / NBRC 100826 / MSB8)).